The following is a 446-amino-acid chain: Histidine--tRNA ligase (446 aa).

It belongs to the class-II aminoacyl-tRNA synthetase family. As to quaternary structure, homodimer.

It localises to the cytoplasm. It carries out the reaction tRNA(His) + L-histidine + ATP = L-histidyl-tRNA(His) + AMP + diphosphate + H(+). This chain is Histidine--tRNA ligase, found in Burkholderia pseudomallei (strain 668).